Reading from the N-terminus, the 563-residue chain is Probable terpene synthase 4 (563 aa).

Mg(2+) contacts are provided by Asp316, Asp320, and Glu469. The DDXXD motif motif lies at Asp316–Asp320.

This sequence belongs to the terpene synthase family. Mg(2+) serves as cofactor.

Probable sesquiterpene synthase. In Ricinus communis (Castor bean), this protein is Probable terpene synthase 4 (TPS4).